A 289-amino-acid polypeptide reads, in one-letter code: Homeobox protein engrailed-2 (289 aa).

2 stretches are compositionally biased toward basic and acidic residues: residues 1 to 12 and 60 to 83; these read MEEGGRSPREEA and EFGRRKEAGGTAGEPRRPGAESRR. 2 disordered regions span residues 1-166 and 179-206; these read MEEG…GNQP and SDRPSSGPRSRKPKKKNPNKEDKRPRTA. Residues 96-114 show a composition bias toward gly residues; that stretch reads VPGGGGGGGGGSPGRGEGG. Low complexity predominate over residues 142–160; sequence LSGAELSVSSDSDSSQAGS. Positions 200-259 form a DNA-binding region, homeobox; sequence DKRPRTAFTAEQLQRLKAEFQTNRYLTEQRRQSLAQELGLNESQIKIWFQNKRAKIKKAT.

Belongs to the engrailed homeobox family.

The protein resides in the nucleus. This chain is Homeobox protein engrailed-2 (EN2), found in Gallus gallus (Chicken).